Here is a 341-residue protein sequence, read N- to C-terminus: UDP-N-acetylenolpyruvoylglucosamine reductase (341 aa).

The FAD-binding PCMH-type domain occupies 13-185; the sequence is FGVEQSCLSM…TAVGLRLPKA (173 aa). The active site involves arginine 161. The Proton donor role is filled by serine 231. Residue glutamate 327 is part of the active site.

It belongs to the MurB family. FAD serves as cofactor.

It is found in the cytoplasm. The enzyme catalyses UDP-N-acetyl-alpha-D-muramate + NADP(+) = UDP-N-acetyl-3-O-(1-carboxyvinyl)-alpha-D-glucosamine + NADPH + H(+). Its pathway is cell wall biogenesis; peptidoglycan biosynthesis. In terms of biological role, cell wall formation. The polypeptide is UDP-N-acetylenolpyruvoylglucosamine reductase (Shewanella sp. (strain MR-7)).